Reading from the N-terminus, the 80-residue chain is Defensin-like protein 207 (80 aa).

The N-terminal stretch at 1–29 is a signal peptide; the sequence is MAKNLNSVSFIVLLLVLLVASTEILKSDA. Cystine bridges form between C38/C64, C50/C75, and C54/C77.

It belongs to the DEFL family.

It is found in the secreted. This chain is Defensin-like protein 207, found in Arabidopsis thaliana (Mouse-ear cress).